A 4363-amino-acid chain; its full sequence is AM-toxin synthetase AMT1 (4363 aa).

The segment at 278-670 is adenylation 1; that stretch reads AGQAKQRPHA…GSLLYVGRKD (393 aa). The region spanning 810–887 is the Carrier 1 domain; sequence APDSVIARQL…ALAAIAKVIP (78 aa). Residue Ser847 is modified to O-(pantetheine 4'-phosphoryl)serine. The tract at residues 926–1340 is condensation 1; the sequence is EDVYACTPLQ…TLGQIDVLTS (415 aa). The adenylation 2 stretch occupies residues 1368-1765; the sequence is KQARTRPGAI…LGRKDTQIKI (398 aa). The 78-residue stretch at 1884 to 1961 folds into the Carrier 2 domain; it reads PPVTDMEKHV…DQARHVTLLT (78 aa). At Ser1922 the chain carries O-(pantetheine 4'-phosphoryl)serine. The interval 1999 to 2410 is condensation 2; it reads EDVYPCTPLQ…ASPSSSTLVS (412 aa). Positions 2448-2853 are adenylation 3; sequence RKKALAAPQA…GRKDNQVKIR (406 aa). Residues 2977–3053 enclose the Carrier 3 domain; sequence LPSTVMEETL…DLAACCTDRR (77 aa). Ser3014 carries the O-(pantetheine 4'-phosphoryl)serine modification. The condensation 3 stretch occupies residues 3098-3503; the sequence is VEDVYPCTPM…ELVSSIETLN (406 aa). Positions 3730–3806 constitute a Carrier 4 domain; the sequence is PAVTAMQLAI…SLAVRATENT (77 aa). Ser3767 carries the post-translational modification O-(pantetheine 4'-phosphoryl)serine. The condensation 4 stretch occupies residues 3850-4204; sequence QDVLPCTSMQ…GLDEIVEHYA (355 aa).

Belongs to the NRP synthetase family.

The protein operates within mycotoxin biosynthesis. Its function is as follows. Nonribosomal peptide synthetase; part of the gene clusters that mediate the biosynthesis of AM-toxins, host-selective toxins (HSTs) causing Alternaria blotch on apple, a worldwide distributed disease. AM-toxins are cyclic depsipeptides containing the 3 residues 2-hydroxy-isovaleric acid (2-HIV), dehydroalanine, L-alanine which are common for all 3 AM-toxins I to III. The fourth precursor is L-alpha-amino-methoxyphenyl-valeric acid (L-Amv) for AM-toxin I, L-alpha-amino-phenyl-valeric acid (L-Apv) for AM-toxin II, and L-alpha-amino-hydroxyphenyl-valeric acid (L-Ahv) for AM-toxin III. AM-toxins have two target sites for affecting susceptible apple cells; they cause invagination of the plasma membrane and electrolyte loss, and chloroplast disorganization. The non-ribosomal peptide synthetase AMT1 contains 4 catalytic modules and is responsible for activation of each residue in AM-toxin. The aldo-keto reductase AMT2 catalyzes the conversion of 2-keto-isovaleric acid (2-KIV) to 2-hydroxy-isovaleric acid (2-HIV), one of the precursor residues incorporated by AMT1 during AM-toxin biosynthesis, by reduction of its ketone to an alcohol. The cytochrome P450 monooxygenase AMT3 and the thioesterase AMT4 are also important for AM-toxin production, but their exact function within the AM-toxin biosynthesis are not known yet. Up to 21 proteins (including AMT1 to AMT4) are predicted to be involved in AM-toxin biosynthesis since their expression ishighly up-regulated in AM-toxin-producing cultures. The sequence is that of AM-toxin synthetase AMT1 from Alternaria alternata (Alternaria rot fungus).